The chain runs to 175 residues: NADH-quinone oxidoreductase subunit B (175 aa).

The [4Fe-4S] cluster site is built by C54, C55, C119, and C149.

The protein belongs to the complex I 20 kDa subunit family. As to quaternary structure, NDH-1 is composed of at least 14 different subunits, Nqo1 to Nqo14. The complex has a L-shaped structure, with the hydrophobic arm (subunits Nqo7, Nqo8, Nqo10 to Nqo14) embedded in the inner membrane and the hydrophilic peripheral arm (subunits Nqo1 to Nqo6, Nqo9) protruding into the bacterial cytoplasm. The hydrophilic domain contains all the redox centers. NADH-quinone oxidoreductase forms a supercomplex with ubiquinol-cytochrome c reductase complex (complex III or cytochrome b-c1 complex) and cytochrome c oxidase (complex IV), which stabilizes the NADH-quinone oxidoreductase complex. [4Fe-4S] cluster serves as cofactor.

It is found in the cell inner membrane. It catalyses the reaction a quinone + NADH + 5 H(+)(in) = a quinol + NAD(+) + 4 H(+)(out). NDH-1 shuttles electrons from NADH, via FMN and iron-sulfur (Fe-S) centers, to quinones in the respiratory chain. The immediate electron acceptor for the enzyme in this species is believed to be ubiquinone. Couples the redox reaction to proton translocation (for every two electrons transferred, four hydrogen ions are translocated across the cytoplasmic membrane), and thus conserves the redox energy in a proton gradient. This is NADH-quinone oxidoreductase subunit B from Paracoccus denitrificans (strain Pd 1222).